A 416-amino-acid chain; its full sequence is Formyl-CoA:oxalate CoA-transferase (416 aa).

CoA-binding positions include 17-18 (QS), arginine 38, 72-75 (LNTK), 96-98 (NFH), histidine 104, and 137-140 (KAYE). The active-site Nucleophile is aspartate 169. 248–250 (GGQ) serves as a coordination point for substrate. 273-275 (QEQ) is a binding site for CoA.

The protein belongs to the CoA-transferase III family. Frc subfamily. Homodimer.

The catalysed reaction is formyl-CoA + oxalate = oxalyl-CoA + formate. It participates in metabolic intermediate degradation; oxalate degradation; CO(2) and formate from oxalate: step 1/2. In terms of biological role, involved in the catabolism of oxalate and in the adapatation to low pH via the induction of the oxalate-dependent acid tolerance response (ATR). Catalyzes the transfer of the CoA moiety from formyl-CoA to oxalate. This chain is Formyl-CoA:oxalate CoA-transferase, found in Shigella sonnei (strain Ss046).